Reading from the N-terminus, the 83-residue chain is Small ribosomal subunit protein bS16 (83 aa).

The protein belongs to the bacterial ribosomal protein bS16 family.

This Stutzerimonas stutzeri (strain A1501) (Pseudomonas stutzeri) protein is Small ribosomal subunit protein bS16.